The following is a 352-amino-acid chain: Sortase SrtE1 (352 aa).

2 stretches are compositionally biased toward basic and acidic residues: residues 1-10 (MTALRPERDS) and 34-45 (RYEESAAGEENR). Residues 1 to 132 (MTALRPERDS…RQARARKPGA (132 aa)) are disordered. At 1–139 (MTALRPERDS…PGAAVVASRA (139 aa)) the chain is on the cytoplasmic side. The tract at residues 15 to 79 (DQGSSYGQPY…TGPIGGGPDG (65 aa)) is required for protein stability. A compositionally biased stretch (gly residues) spans 71-82 (GPIGGGPDGGGR). The segment covering 83 to 97 (AARRKAAKRRHGRRG) has biased composition (basic residues). The chain crosses the membrane as a helical span at residues 140 to 160 (IGEIFITTGVLMLLFVTYQLW). At 161 to 352 (WTNVRAHAQA…SKGKPDALVS (192 aa)) the chain is on the extracellular side. Residues His251 and Cys320 contribute to the active site. The active-site Proton donor is the Arg329.

It belongs to the bacterial sortase family. Class E subfamily.

The protein resides in the cell membrane. It carries out the reaction The enzyme catalyzes a cell wall sorting reaction in which a surface protein with a sorting signal containing a LPXTG motif is cleaved between the Thr and Gly residue. The resulting threonine carboxyl end of the protein is covalently attached to a pentaglycine cross-bridge of peptidoglycan.. In terms of biological role, transpeptidase that anchors surface proteins to the cell wall. Recognizes both Leu-Ala-x-Thr-Gly and Leu-Pro-x-Thr-Gly, with a preference for the former. Unlike the S.aureus sortase it cleaves not only the Thr-Gly motif but also the Ala-X bond; Ala-Glu and Ala-His bonds are better substrates than the Thr-Gly motif in vitro. Among its possible substrates are the chaplins ChpA, ChpB and ChpC; this enzyme is less important for ChpC attachment than is SrtE2. A double knockout mutant of srtE1 and srtE2 shows a developmental defect in aerial hyphae formation more dramatic than that due to chaplin deletion. This chain is Sortase SrtE1, found in Streptomyces coelicolor (strain ATCC BAA-471 / A3(2) / M145).